Reading from the N-terminus, the 174-residue chain is MEAPGPRALRTALCGGCCCLLLCAQLAVAGKGARGFGRGALIRLNIWPAVQGACKQLEVCEHCVEGDGARNLSSCVWEQCRPEEPGHCVAQSEVVKEGCSIYNRSEACPAAHHHPTYEPKTVTTGSPPVPEAHSPGFDGASFIGGVVLVLSLQAVAFFVLHFLKAKDSTYQTLI.

The signal sequence occupies residues 1–29 (MEAPGPRALRTALCGGCCCLLLCAQLAVA). Residues 30-141 (GKGARGFGRG…AHSPGFDGAS (112 aa)) are Extracellular-facing. 2 N-linked (GlcNAc...) asparagine glycosylation sites follow: asparagine 71 and asparagine 103. A helical membrane pass occupies residues 142 to 162 (FIGGVVLVLSLQAVAFFVLHF). Residues 163-174 (LKAKDSTYQTLI) are Cytoplasmic-facing.

Belongs to the CD164 family.

The protein resides in the membrane. In Homo sapiens (Human), this protein is CD164 sialomucin-like 2 protein (CD164L2).